The chain runs to 131 residues: Cytochrome b5 (131 aa).

The Cytochrome b5 heme-binding domain maps to 3–79 (AKIFSLDEVS…LEEYLIGSLD (77 aa)). Residues H38 and H62 each contribute to the heme site. Residues 108-125 (IILPALAIIGALVYKYVI) form a helical membrane-spanning segment.

Belongs to the cytochrome b5 family.

It is found in the endoplasmic reticulum membrane. The protein resides in the microsome membrane. Functionally, membrane bound hemoprotein which function as an electron carrier for several membrane bound oxygenases. This Rhizopus stolonifer (Rhizopus nigricans) protein is Cytochrome b5.